A 271-amino-acid polypeptide reads, in one-letter code: Tryptophan synthase alpha chain (271 aa).

Residues E59 and D70 each act as proton acceptor in the active site.

The protein belongs to the TrpA family. In terms of assembly, tetramer of two alpha and two beta chains.

The enzyme catalyses (1S,2R)-1-C-(indol-3-yl)glycerol 3-phosphate + L-serine = D-glyceraldehyde 3-phosphate + L-tryptophan + H2O. It participates in amino-acid biosynthesis; L-tryptophan biosynthesis; L-tryptophan from chorismate: step 5/5. The alpha subunit is responsible for the aldol cleavage of indoleglycerol phosphate to indole and glyceraldehyde 3-phosphate. In Methanosarcina mazei (strain ATCC BAA-159 / DSM 3647 / Goe1 / Go1 / JCM 11833 / OCM 88) (Methanosarcina frisia), this protein is Tryptophan synthase alpha chain.